We begin with the raw amino-acid sequence, 185 residues long: Ribosome-recycling factor (185 aa).

This sequence belongs to the RRF family.

It localises to the cytoplasm. Responsible for the release of ribosomes from messenger RNA at the termination of protein biosynthesis. May increase the efficiency of translation by recycling ribosomes from one round of translation to another. This Pseudomonas putida (strain W619) protein is Ribosome-recycling factor.